A 911-amino-acid polypeptide reads, in one-letter code: Protein translocase subunit SecA (911 aa).

ATP contacts are provided by residues Gln87, 105–109, and Asp499; that span reads GEGKT. Zn(2+) contacts are provided by Cys895, Cys897, Cys906, and His907.

It belongs to the SecA family. As to quaternary structure, monomer and homodimer. Part of the essential Sec protein translocation apparatus which comprises SecA, SecYEG and auxiliary proteins SecDF-YajC and YidC. The cofactor is Zn(2+).

The protein resides in the cell inner membrane. The protein localises to the cytoplasm. The enzyme catalyses ATP + H2O + cellular proteinSide 1 = ADP + phosphate + cellular proteinSide 2.. In terms of biological role, part of the Sec protein translocase complex. Interacts with the SecYEG preprotein conducting channel. Has a central role in coupling the hydrolysis of ATP to the transfer of proteins into and across the cell membrane, serving both as a receptor for the preprotein-SecB complex and as an ATP-driven molecular motor driving the stepwise translocation of polypeptide chains across the membrane. The sequence is that of Protein translocase subunit SecA from Novosphingobium aromaticivorans (strain ATCC 700278 / DSM 12444 / CCUG 56034 / CIP 105152 / NBRC 16084 / F199).